The primary structure comprises 428 residues: 26S proteasome regulatory subunit 7 (428 aa).

211 to 218 (GPPGTGKT) lines the ATP pocket.

Belongs to the AAA ATPase family.

It is found in the cytoplasm. The protein localises to the nucleus. The 26S proteasome is involved in the ATP-dependent degradation of ubiquitinated proteins. The regulatory (or ATPase) complex confers ATP dependency and substrate specificity to the 26S complex. The chain is 26S proteasome regulatory subunit 7 (psmC2) from Dictyostelium discoideum (Social amoeba).